The chain runs to 981 residues: Lateral signaling target protein 2 homolog (981 aa).

Residues 308–462 (PLGSSSIEAP…LESSDDDTDE (155 aa)) are disordered. Composition is skewed to low complexity over residues 326 to 356 (TTSSSQNNNNSSNNNHSSSSTTTTTMGTTNT), 369 to 380 (NNHNSNSNSSTN), 390 to 404 (SPSMLSLSATSTPTA), and 412 to 433 (PSHSIDSTSSAATSSTNPPADW). The span at 434 to 462 (SDGDDEDEDDDDIEVDEEDLESSDDDTDE) shows a compositional bias: acidic residues. Ser544 and Ser545 each carry phosphoserine. Disordered stretches follow at residues 561–642 (EQMQ…SSLS) and 749–897 (DNVF…SPPA). Residues 576–611 (HSHRHHQRHHHHHHHRHSHQHRQPHPHRTTRSGRKR) are compositionally biased toward basic residues. Over residues 630–642 (LASGDTSAASSLS) the composition is skewed to low complexity. Residues 760–791 (ATGQRHSAGASMQRNNTIDLASQSGEGSPSGA) show a composition bias toward polar residues. Phosphoserine is present on Ser805. 2 stretches are compositionally biased toward low complexity: residues 811–866 (AASS…PVSA) and 883–896 (PSSATSTSATLSPP). The segment at 901 to 961 (DGKAPRCMAC…VCRDCYVREV (61 aa)) adopts an FYVE-type zinc-finger fold. The Zn(2+) site is built by Cys907, Cys910, Cys923, Cys926, Cys931, Cys934, Cys953, and Cys956.

The protein belongs to the lst-2 family.

Its function is as follows. Negative regulator of epidermal growth factor receptor (EGFR) signaling. In Drosophila erecta (Fruit fly), this protein is Lateral signaling target protein 2 homolog.